Here is a 154-residue protein sequence, read N- to C-terminus: Ribonuclease H (154 aa).

Residues 1–142 (MLKQITLYTD…CDELARNAAL (142 aa)) enclose the RNase H type-1 domain. Mg(2+)-binding residues include Asp10, Glu48, Asp70, and Asp134.

The protein belongs to the RNase H family. As to quaternary structure, monomer. It depends on Mg(2+) as a cofactor.

It is found in the cytoplasm. It catalyses the reaction Endonucleolytic cleavage to 5'-phosphomonoester.. Endonuclease that specifically degrades the RNA of RNA-DNA hybrids. In Tolumonas auensis (strain DSM 9187 / NBRC 110442 / TA 4), this protein is Ribonuclease H.